Reading from the N-terminus, the 339-residue chain is Phosphate acyltransferase (339 aa).

Belongs to the PlsX family. In terms of assembly, homodimer. Probably interacts with PlsY.

It localises to the cytoplasm. It catalyses the reaction a fatty acyl-[ACP] + phosphate = an acyl phosphate + holo-[ACP]. The protein operates within lipid metabolism; phospholipid metabolism. In terms of biological role, catalyzes the reversible formation of acyl-phosphate (acyl-PO(4)) from acyl-[acyl-carrier-protein] (acyl-ACP). This enzyme utilizes acyl-ACP as fatty acyl donor, but not acyl-CoA. The polypeptide is Phosphate acyltransferase (Moorella thermoacetica (strain ATCC 39073 / JCM 9320)).